We begin with the raw amino-acid sequence, 212 residues long: Transmembrane emp24 domain-containing protein p24delta4 (212 aa).

The N-terminal stretch at 1–25 (MKKKMIPTTILLSALIFSLSPICEA) is a signal peptide. Over 26–179 (VWLTVPHTGS…RIVSEKTNSR (154 aa)) the chain is Lumenal. The 113-residue stretch at 35-147 (SKCVSEEIQS…IEGVELEFKK (113 aa)) folds into the GOLD domain. Residue asparagine 82 is glycosylated (N-linked (GlcNAc...) asparagine). A coiled-coil region spans residues 133-155 (ARKEKIEGVELEFKKLEGAVEAI). Arginine 165 and arginine 170 each carry omega-N-methylated arginine. The helical transmembrane segment at 180–200 (VAWYSIMSLGICIVVSGLQIL) threads the bilayer. The Cytoplasmic portion of the chain corresponds to 201 to 212 (YLKQYFEKKKLI). The COPII vesicle coat-binding signature appears at 205-206 (YF). A COPI vesicle coat-binding motif is present at residues 205 to 212 (YFEKKKLI).

This sequence belongs to the EMP24/GP25L family. In terms of assembly, probably oligomerizes with other members of the EMP24/GP25L family. Associates with the COPI vesicle coat (coatomer). Associates with the COPII vesicle coat (coatomer).

Its subcellular location is the endoplasmic reticulum membrane. It is found in the golgi apparatus membrane. In terms of biological role, involved in vesicular protein trafficking. Mainly functions in the early secretory pathway. Required for trafficking GLL23, a component of the PYK10 complex. May act as a receptor facilitating its packing into COPII carriers and export from the endoplasmic reticulum. This chain is Transmembrane emp24 domain-containing protein p24delta4 (CYB), found in Arabidopsis thaliana (Mouse-ear cress).